The following is a 432-amino-acid chain: Adenylosuccinate synthetase (432 aa).

GTP-binding positions include 13 to 19 (GDEGKGK) and 41 to 43 (GHT). The active-site Proton acceptor is the Asp14. Mg(2+) contacts are provided by Asp14 and Gly41. Residues 14-17 (DEGK), 39-42 (NAGH), Thr130, Arg144, Gln225, Thr240, and Arg304 each bind IMP. Residue His42 is the Proton donor of the active site. 300–306 (ATTGRRR) provides a ligand contact to substrate. GTP is bound by residues Arg306, 332–334 (KLD), and 415–417 (STG).

The protein belongs to the adenylosuccinate synthetase family. As to quaternary structure, homodimer. Requires Mg(2+) as cofactor.

Its subcellular location is the cytoplasm. The enzyme catalyses IMP + L-aspartate + GTP = N(6)-(1,2-dicarboxyethyl)-AMP + GDP + phosphate + 2 H(+). Its pathway is purine metabolism; AMP biosynthesis via de novo pathway; AMP from IMP: step 1/2. Functionally, plays an important role in the de novo pathway of purine nucleotide biosynthesis. Catalyzes the first committed step in the biosynthesis of AMP from IMP. This is Adenylosuccinate synthetase from Citrobacter koseri (strain ATCC BAA-895 / CDC 4225-83 / SGSC4696).